We begin with the raw amino-acid sequence, 321 residues long: Porin Omp2a (321 aa).

The first 22 residues, 1–22, serve as a signal peptide directing secretion; it reads MNIKSLLLGSAAALVAASGAQA.

The protein belongs to the alphaproteobacteria porin family. In terms of assembly, monomer.

The protein localises to the cell outer membrane. Forms passive diffusion pores that allow small molecular weight hydrophilic materials across the outer membrane. The chain is Porin Omp2a (omp2a) from Brucella abortus (strain S19).